Consider the following 766-residue polypeptide: Protein sak1 (766 aa).

The segment at residues 101 to 176 (GICWLKRACE…YHYCGIKLRG (76 aa)) is a DNA-binding region (RFX-type winged-helix). A phosphoserine mark is found at Ser223, Ser224, and Ser227. Disordered stretches follow at residues 271 to 308 (PQAH…QPTY) and 708 to 731 (LQEH…QQQQ). A compositionally biased stretch (polar residues) spans 279–289 (HLSQSNVPPQL). Low complexity-rich tracts occupy residues 290–308 (SHSS…QPTY) and 715–731 (QQHF…QQQQ).

Belongs to the RFX family.

It is found in the nucleus. Positively regulates cyclic AMP-dependent protein kinase-mediated exit from the mitotic cell cycle. In Schizosaccharomyces pombe (strain 972 / ATCC 24843) (Fission yeast), this protein is Protein sak1 (sak1).